An 824-amino-acid polypeptide reads, in one-letter code: ABC transporter B family member 7 (824 aa).

Residues 41–101 form a disordered region; the sequence is RNSVKFNLDT…NKNNKNKINN (61 aa). Low complexity predominate over residues 63–101; it reads NNNKNNNNNNNNNNNNNNNNNNNNNNNNNNKNNKNKINN. 6 consecutive transmembrane segments (helical) span residues 164–184, 252–272, 325–345, 347–367, 431–451, and 461–481; these read IWYFVFAFLALSITTLCQLAL, WIIIIVLVQTPFLFARYLLFT, LSTLVRCSLQLIGGLLILVFL, WKVTLLMISFLVILLISFLVF, AFWISFGSLLVMGTIIGIYGF, and ILLLQFILYSLMITASMNGLI. The region spanning 167–489 is the ABC transmembrane type-1 domain; the sequence is FVFAFLALSI…LIGSINEIQK (323 aa). One can recognise an ABC transporter domain in the interval 521 to 767; that stretch reads ISFDNVYFNN…STSFYVTSVL (247 aa). 570-576 lines the ATP pocket; the sequence is GPSQSKE. A disordered region spans residues 772 to 813; it reads NKYNNNNNNNNNNNNNNNNNNNNNNNNNNNNNNNNNNNNINN.

Belongs to the ABC transporter superfamily. ABCB family.

Its subcellular location is the membrane. The sequence is that of ABC transporter B family member 7 (abcB7) from Dictyostelium discoideum (Social amoeba).